The chain runs to 65 residues: Large ribosomal subunit protein bL35 (65 aa).

The span at 1–16 (MPKQKTHRASAKRFKR) shows a compositional bias: basic residues. The tract at residues 1–20 (MPKQKTHRASAKRFKRTGSG) is disordered.

It belongs to the bacterial ribosomal protein bL35 family.

The polypeptide is Large ribosomal subunit protein bL35 (Streptococcus pyogenes serotype M1).